The following is a 260-amino-acid chain: Hemin import ATP-binding protein HmuV (260 aa).

The ABC transporter domain maps to Leu-6–Arg-242. Gly-38–Ser-45 lines the ATP pocket.

Belongs to the ABC transporter superfamily. Heme (hemin) importer (TC 3.A.1.14.5) family. The complex is composed of two ATP-binding proteins (HmuV), two transmembrane proteins (HmuU) and a solute-binding protein (HmuT).

It localises to the cell inner membrane. Its function is as follows. Part of the ABC transporter complex HmuTUV involved in hemin import. Responsible for energy coupling to the transport system. This chain is Hemin import ATP-binding protein HmuV, found in Vibrio parahaemolyticus serotype O3:K6 (strain RIMD 2210633).